Consider the following 717-residue polypeptide: LVDRDPVKTSFEEWARPGHFSRTIAKGPETTTWIWNLHADAHDFDSHTSDLEEISRKVFSAHFGQLSIIFLWLSGMYFHGARFSNYEAWLSDPTHIGPSAQVVWPIVGQEILNGDVGGGFRGIQITSGFFQIWRASGITSELQLYCTAIGALVFAGLMLFAGWFHYHKAAPKLAWFQDVESMLNHHLAGLLGLGSLSWAGHQVHVSLPINQFLDAGVDPKEIPLPHEFILNRDLLAQLYPSFAEGATPFFTLNWSKYAEFLTFRGGLDPVTGGLWLTDIAHHHLAIAILFLIAGHMYRTNWGIGHGLKDILEAHKGPFTGQGHKGLYEILTTSWHAQLSLNLAMLGSLTIVVAHHMYSMPPYPYLAIDYGTQLSLFTHHMWIGGFLIVGAAAHAAIFMVRDYDPTTRYNDLLDRVLRHRDAIISHLNWACIFLGFHSFGLYIHNDTMSALGRPQDMFSDTAIQLQPIFAQWVQNTHALAPGATAPGATTSTSLTWGGGDLIAVGGKVALLPIPLGTADFLVHHIHAFTIHVTVLILLKGVLFARSSRLIPDKANLGFRFPCDGPGRGGTCQVSAWDHVFLGLFWMYNAISVVIFHFSWKMQSDVWGSISDQGVVTHITGGNFAQSSITINGWLRDFLWAQASQVIQSYGSSLSAYGLFFLGAHFVWAFSLMFLFSGRGYWQELIESIVWAHNKLKVAPATQPRALSIVQGRAVGVTH.

A run of 8 helical transmembrane segments spans residues 58 to 81, 144 to 167, 183 to 207, 279 to 297, 334 to 357, 373 to 399, 421 to 443, and 519 to 537; these read VFSA…FHGA, LYCT…FHYH, LNHH…HVSL, IAHH…GHMY, WHAQ…HHMY, LSLF…IFMV, AIIS…LYIH, and FLVH…LILL. 2 residues coordinate [4Fe-4S] cluster: Cys561 and Cys570. Transmembrane regions (helical) follow at residues 577–598 and 652–674; these read HVFL…HFSW and LSAY…MFLF. Position 663 (His663) interacts with chlorophyll a'. Chlorophyll a contacts are provided by Met671 and Tyr679. Trp680 provides a ligand contact to phylloquinone. Residues 712–717 form a helical membrane-spanning segment; that stretch reads AVGVTH.

The protein belongs to the PsaA/PsaB family. In terms of assembly, the PsaA/B heterodimer binds the P700 chlorophyll special pair and subsequent electron acceptors. PSI consists of a core antenna complex that captures photons, and an electron transfer chain that converts photonic excitation into a charge separation. The eukaryotic PSI reaction center is composed of at least 11 subunits. It depends on P700 is a chlorophyll a/chlorophyll a' dimer, A0 is one or more chlorophyll a, A1 is one or both phylloquinones and FX is a shared 4Fe-4S iron-sulfur center. as a cofactor.

It is found in the plastid. The protein resides in the chloroplast thylakoid membrane. The enzyme catalyses reduced [plastocyanin] + hnu + oxidized [2Fe-2S]-[ferredoxin] = oxidized [plastocyanin] + reduced [2Fe-2S]-[ferredoxin]. Functionally, psaA and PsaB bind P700, the primary electron donor of photosystem I (PSI), as well as the electron acceptors A0, A1 and FX. PSI is a plastocyanin-ferredoxin oxidoreductase, converting photonic excitation into a charge separation, which transfers an electron from the donor P700 chlorophyll pair to the spectroscopically characterized acceptors A0, A1, FX, FA and FB in turn. Oxidized P700 is reduced on the lumenal side of the thylakoid membrane by plastocyanin. The chain is Photosystem I P700 chlorophyll a apoprotein A1 from Drimys winteri (Winter's bark).